A 171-amino-acid polypeptide reads, in one-letter code: MKVYKDIFTNDEVCSDSYIQEDPFGNAEFREIAFEVKSNKRIKGNDDYGIADNSEDAVDGMGADVEHVIDIVDSFQLTSTSLSKKEYSAYVKNFMQRILKHLEEKKPDRVNIFKTKAQPLIKHILTNFDDFEFYMGESLDMEAGLIYSYYKGEEITPRFVYISDGLFEEKY.

One can recognise a TCTP domain in the interval 1 to 171 (MKVYKDIFTN…ISDGLFEEKY (171 aa)).

This sequence belongs to the TCTP family.

The protein localises to the cytoplasm. In terms of biological role, involved in calcium binding and microtubule stabilization. This is Translationally-controlled tumor protein homolog (TCTP) from Plasmodium berghei (strain Anka).